A 372-amino-acid chain; its full sequence is Glutamate 5-kinase (372 aa).

Lys14 contributes to the ATP binding site. The substrate site is built by Ser54, Asp141, and Asn153. Residues 173 to 174 and 215 to 221 each bind ATP; these read TD and TGGMSTK. The 79-residue stretch at 280-358 folds into the PUA domain; that stretch reads QGSLVLDAGA…DEIESVLGYD (79 aa).

The protein belongs to the glutamate 5-kinase family.

It is found in the cytoplasm. It catalyses the reaction L-glutamate + ATP = L-glutamyl 5-phosphate + ADP. Its pathway is amino-acid biosynthesis; L-proline biosynthesis; L-glutamate 5-semialdehyde from L-glutamate: step 1/2. Catalyzes the transfer of a phosphate group to glutamate to form L-glutamate 5-phosphate. This is Glutamate 5-kinase from Shewanella oneidensis (strain ATCC 700550 / JCM 31522 / CIP 106686 / LMG 19005 / NCIMB 14063 / MR-1).